The chain runs to 611 residues: Menin (611 aa).

Residues 214-390 (GVAERSWLYL…SLLETGEERT (177 aa)) form an interaction with FANCD2 region. A disordered region spans residues 460–553 (REAEAAEAEE…SPPPEGPVLT (94 aa)). Positions 484 to 500 (RRESKPEEPPPPKKPAL) are enriched in basic and acidic residues. Ser-487 and Ser-544 each carry phosphoserine. Phosphothreonine is present on Thr-595.

Component of the MLL-HCF complex, at least composed of KMT2A/MLL1, MEN1, ASH2L, RBBP5, DPY30, WDR5, HCFC1 and HCFC2. Component of the menin-associated histone methyltransferase complex, at least composed of KMT2B/MLL4, MEN1, ASH2L, RBBP5, DPY30 and WDR5. Interacts with POLR2B. Interacts with POLR2A phosphorylated at 'Ser-5', but not with the unphosphorylated, nor 'Ser-2' phosphorylated POLR2A forms. Interacts with FANCD2 and DBF4. Interacts with SMAD3, but not with SMAD2, nor SMAD4. Directly interacts with NFKB1, NFKB2 and RELA. Interacts with JUND (via MBM motif); inhibits the interaction of JUND with MAPK10 and the phosphorylation of JUND by MAP kinases MAPK8 and MAPK10. Interacts with KMT2A (via MBM motif). The KMT2A-MEN1 complex interacts with PSIP1 with a greater affinity as MEN1 enhances interaction of KMT2A with PSIP1. As to expression, widely expressed, with high levels in hippocampus, cerebral cortex, testis and thymus (at protein level). Also expressed at high levels in pancreatic islets, ovary and bone marrow. In the brain, highest expression in hippocampus pyramidal nerve cells (at protein level). In the testis, may be expressed in spermatogonia (at protein level). Low expression, if any, in skeletal muscle.

It is found in the nucleus. In terms of biological role, essential component of a MLL/SET1 histone methyltransferase (HMT) complex, a complex that specifically methylates 'Lys-4' of histone H3 (H3K4). Functions as a transcriptional regulator. Binds to the TERT promoter and represses telomerase expression. Plays a role in TGFB1-mediated inhibition of cell-proliferation, possibly regulating SMAD3 transcriptional activity. Represses JUND-mediated transcriptional activation on AP1 sites, as well as that mediated by NFKB subunit RELA. Positively regulates HOXC8 and HOXC6 gene expression. May be involved in normal hematopoiesis through the activation of HOXA9 expression. May be involved in DNA repair. This chain is Menin (Men1), found in Mus musculus (Mouse).